The chain runs to 677 residues: Methionine--tRNA ligase (677 aa).

The short motif at 15-25 is the 'HIGH' region element; that stretch reads PYANGSIHLGH. Residues cysteine 146, cysteine 149, cysteine 159, and cysteine 162 each coordinate Zn(2+). Residues 333–337 carry the 'KMSKS' region motif; it reads KMSKS. Residue lysine 336 coordinates ATP. Residues 575 to 677 form the tRNA-binding domain; it reads DFAKVDLRVA…AGAKPGHQVK (103 aa).

The protein belongs to the class-I aminoacyl-tRNA synthetase family. MetG type 1 subfamily. As to quaternary structure, homodimer. Requires Zn(2+) as cofactor.

It localises to the cytoplasm. The catalysed reaction is tRNA(Met) + L-methionine + ATP = L-methionyl-tRNA(Met) + AMP + diphosphate. Functionally, is required not only for elongation of protein synthesis but also for the initiation of all mRNA translation through initiator tRNA(fMet) aminoacylation. The polypeptide is Methionine--tRNA ligase (Escherichia coli O127:H6 (strain E2348/69 / EPEC)).